The sequence spans 165 residues: CDP-archaeol synthase (165 aa).

The next 4 helical transmembrane spans lie at 41–61 (GLIC…WLVG), 72–92 (ILSV…KSFI), 103–123 (AWPV…TIIF), and 127–147 (WFFA…TPVL).

This sequence belongs to the CDP-archaeol synthase family. Mg(2+) is required as a cofactor.

The protein localises to the cell membrane. The catalysed reaction is 2,3-bis-O-(geranylgeranyl)-sn-glycerol 1-phosphate + CTP + H(+) = CDP-2,3-bis-O-(geranylgeranyl)-sn-glycerol + diphosphate. The protein operates within membrane lipid metabolism; glycerophospholipid metabolism. Functionally, catalyzes the formation of CDP-2,3-bis-(O-geranylgeranyl)-sn-glycerol (CDP-archaeol) from 2,3-bis-(O-geranylgeranyl)-sn-glycerol 1-phosphate (DGGGP) and CTP. This reaction is the third ether-bond-formation step in the biosynthesis of archaeal membrane lipids. The chain is CDP-archaeol synthase from Methanoregula boonei (strain DSM 21154 / JCM 14090 / 6A8).